The following is a 344-amino-acid chain: Anthranilate phosphoribosyltransferase (344 aa).

5-phospho-alpha-D-ribose 1-diphosphate-binding positions include G85, 88 to 89 (GD), T93, 95 to 98 (NIST), 113 to 121 (KHGNRSVSS), and S125. Anthranilate is bound at residue G85. Residue S97 coordinates Mg(2+). N116 is an anthranilate binding site. R171 provides a ligand contact to anthranilate. Positions 229 and 230 each coordinate Mg(2+).

This sequence belongs to the anthranilate phosphoribosyltransferase family. As to quaternary structure, homodimer. It depends on Mg(2+) as a cofactor.

It catalyses the reaction N-(5-phospho-beta-D-ribosyl)anthranilate + diphosphate = 5-phospho-alpha-D-ribose 1-diphosphate + anthranilate. Its pathway is amino-acid biosynthesis; L-tryptophan biosynthesis; L-tryptophan from chorismate: step 2/5. Catalyzes the transfer of the phosphoribosyl group of 5-phosphorylribose-1-pyrophosphate (PRPP) to anthranilate to yield N-(5'-phosphoribosyl)-anthranilate (PRA). The chain is Anthranilate phosphoribosyltransferase from Shewanella amazonensis (strain ATCC BAA-1098 / SB2B).